A 374-amino-acid chain; its full sequence is Succinyl-diaminopimelate desuccinylase (374 aa).

H66 lines the Zn(2+) pocket. D68 is a catalytic residue. Position 99 (D99) interacts with Zn(2+). The active-site Proton acceptor is E133. The Zn(2+) site is built by E134, E162, and H348.

Belongs to the peptidase M20A family. DapE subfamily. As to quaternary structure, homodimer. Zn(2+) is required as a cofactor. The cofactor is Co(2+).

It carries out the reaction N-succinyl-(2S,6S)-2,6-diaminopimelate + H2O = (2S,6S)-2,6-diaminopimelate + succinate. The protein operates within amino-acid biosynthesis; L-lysine biosynthesis via DAP pathway; LL-2,6-diaminopimelate from (S)-tetrahydrodipicolinate (succinylase route): step 3/3. Its function is as follows. Catalyzes the hydrolysis of N-succinyl-L,L-diaminopimelic acid (SDAP), forming succinate and LL-2,6-diaminopimelate (DAP), an intermediate involved in the bacterial biosynthesis of lysine and meso-diaminopimelic acid, an essential component of bacterial cell walls. In Coxiella burnetii (strain CbuK_Q154) (Coxiella burnetii (strain Q154)), this protein is Succinyl-diaminopimelate desuccinylase.